Consider the following 511-residue polypeptide: Probable G-protein coupled receptor 101 (511 aa).

At M1 to S35 the chain is on the extracellular side. N-linked (GlcNAc...) asparagine glycans are attached at residues N7 and N13. A helical transmembrane segment spans residues V36–L56. Topologically, residues H57–N67 are cytoplasmic. The chain crosses the membrane as a helical span at residues R68–S90. Over T91–A106 the chain is Extracellular. A disulfide bridge connects residues C104 and C182. The helical transmembrane segment at L107–V127 threads the bilayer. Residues D128 to Y149 are Cytoplasmic-facing. The chain crosses the membrane as a helical span at residues I150 to W170. The Extracellular segment spans residues G171 to S196. Residues V197–G217 form a helical membrane-spanning segment. Residues A218 to R398 lie on the Cytoplasmic side of the membrane. Over residues D240 to E261 the composition is skewed to basic and acidic residues. 2 disordered regions span residues D240–N315 and E367–P386. The span at P376 to D385 shows a compositional bias: polar residues. Residues V399 to V419 traverse the membrane as a helical segment. Over L420 to Q432 the chain is Extracellular. Residues W433 to Y453 form a helical membrane-spanning segment. Residues G454 to P511 are Cytoplasmic-facing. The interval S476 to P511 is disordered. Residues P477 to E490 show a composition bias toward basic and acidic residues.

It belongs to the G-protein coupled receptor 1 family. In terms of tissue distribution, expressed in the brain in hypothalamus.

The protein localises to the cell membrane. In terms of biological role, orphan receptor. This chain is Probable G-protein coupled receptor 101 (Gpr101), found in Mus musculus (Mouse).